Here is a 4134-residue protein sequence, read N- to C-terminus: DNA-dependent protein kinase catalytic subunit (4134 aa).

3 HEAT repeats span residues 900–937, 1000–1036, and 1050–1085; these read VIYL…VAYM, QDTV…LKWS, and ANTK…YREF. TPR repeat units lie at residues 1265 to 1305 and 1722 to 1755; these read YNTF…HDIH and PMSS…SQSP. S2055 is modified (phosphoserine; by autocatalysis). One copy of the TPR 3 repeat lies at 2207–2240; sequence DEILANRLLEFLMKNAFHQKRAVFRHNLEIIKTV. Phosphothreonine; by autocatalysis is present on T2609. The span at 2611–2629 shows a compositional bias: polar residues; it reads ASQSTNRNSSQERSLSISG. A disordered region spans residues 2611-2631; that stretch reads ASQSTNRNSSQERSLSISGSV. S2612 is modified (phosphoserine; by autocatalysis). Residues T2638 and T2647 each carry the phosphothreonine; by autocatalysis modification. One can recognise an FAT domain in the interval 2880 to 3545; sequence NVSTSCLASL…IYPFTISSES (666 aa). Residues 3728-4059 form the PI3K/PI4K catalytic domain; sequence FDERIMVLES…VSYVKRKLTG (332 aa). The G-loop stretch occupies residues 3734–3740; it reads VLESLRK. The catalytic loop stretch occupies residues 3925–3933; it reads GIGDRHLSN. The interval 3945–3970 is activation loop; sequence GIDFGHAFGSATQFLPVPELMPFRLT. An FATC domain is found at 4102–4134; sequence DRLSEETQVRCLIDQATDPNLLGRVWEGWEPWM.

Belongs to the PI3/PI4-kinase family. In terms of assembly, DNA-PK is a heterotrimer of PRKDC and the Ku dimer (composed of XRCC6/Ku70 and XRCC5/Ku86). Component of the core long-range non-homologous end joining (NHEJ) complex (also named DNA-PK complex) composed of PRKDC, LIG4, XRCC4, XRCC6/Ku70, XRCC5/Ku86 and NHEJ1/XLF. Additional component of the NHEJ complex includes PAXX. Following autophosphorylation, PRKDC dissociates from DNA. Autophosphorylated at two clusters, the T2609 cluster and the S2056 cluster. Autophosphorylated on Ser-2055, Thr-2609, Thr-2638 and Thr-2647. Ser-2055 and Thr-2609 are DNA damage-inducible phosphorylation sites (inducible with ionizing radiation, IR) dephosphorylated by PPP5C. Autophosphorylation induces a conformational change that leads to remodeling of the DNA-PK complex, requisite for efficient end processing and DNA repair. Autophosphorylation in trans within DNA-PK complexes loaded on DNA ends leads to the dissociation of PRKDC from DNA and the transition into the short-range NHEJ complex. Autophosphorylation of the T2609 cluster is required for hematopoietic development and protein synthesis in erythrocytes precursors.

It is found in the nucleus. The protein resides in the nucleolus. The enzyme catalyses L-seryl-[protein] + ATP = O-phospho-L-seryl-[protein] + ADP + H(+). The catalysed reaction is L-threonyl-[protein] + ATP = O-phospho-L-threonyl-[protein] + ADP + H(+). Serine/threonine-protein kinase that acts as a molecular sensor for DNA damage. Involved in DNA nonhomologous end joining (NHEJ) required for double-strand break (DSB) repair and V(D)J recombination. Must be bound to DNA to express its catalytic properties. Promotes processing of hairpin DNA structures in V(D)J recombination by activation of the hairpin endonuclease artemis (DCLRE1C). Recruited by XRCC5 and XRCC6 to DNA ends and is required to (1) protect and align broken ends of DNA, thereby preventing their degradation, (2) and sequester the DSB for repair by NHEJ. Acts as a scaffold protein to aid the localization of DNA repair proteins to the site of damage. The assembly of the DNA-PK complex at DNA ends is also required for the NHEJ ligation step. Found at the ends of chromosomes, suggesting a further role in the maintenance of telomeric stability and the prevention of chromosomal end fusion. As part of the DNA-PK complex, involved in the early steps of ribosome assembly by promoting the processing of precursor rRNA into mature 18S rRNA in the small-subunit processome. Recognizes the substrate consensus sequence [ST]-Q. Phosphorylates 'Ser-139' of histone variant H2AX, thereby regulating DNA damage response mechanism. This chain is DNA-dependent protein kinase catalytic subunit (PRKDC), found in Gallus gallus (Chicken).